Here is a 256-residue protein sequence, read N- to C-terminus: Diacetyl reductase [(S)-acetoin forming] (256 aa).

Residues 6–33 (LVTG…AIAD) and Asp59 each bind NAD(+). Ser139 contacts substrate. Tyr152 functions as the Proton acceptor in the catalytic mechanism. Residue Lys156 coordinates NAD(+).

This sequence belongs to the short-chain dehydrogenases/reductases (SDR) family. In terms of assembly, homotetramer.

The enzyme catalyses (S)-acetoin + NAD(+) = diacetyl + NADH + H(+). Its function is as follows. Catalyzes the reversible reduction of (S)-acetoin to 2,3-butanediol in the presence of NADH. This Klebsiella pneumoniae protein is Diacetyl reductase [(S)-acetoin forming] (budC).